A 380-amino-acid polypeptide reads, in one-letter code: Crotonobetainyl-CoA reductase (380 aa).

It belongs to the acyl-CoA dehydrogenase family. Homotetramer. FAD serves as cofactor.

It is found in the cytoplasm. It carries out the reaction 4-(trimethylamino)butanoyl-CoA + oxidized [electron-transfer flavoprotein] + H(+) = crotonobetainyl-CoA + reduced [electron-transfer flavoprotein]. It participates in amine and polyamine metabolism; carnitine metabolism. Its function is as follows. Catalyzes the reduction of crotonobetainyl-CoA to gamma-butyrobetainyl-CoA. In Escherichia coli O6:K15:H31 (strain 536 / UPEC), this protein is Crotonobetainyl-CoA reductase.